The chain runs to 293 residues: 4-hydroxy-tetrahydrodipicolinate synthase (293 aa).

Pyruvate is bound at residue Thr-44. Tyr-132 serves as the catalytic Proton donor/acceptor. Catalysis depends on Lys-161, which acts as the Schiff-base intermediate with substrate. Ile-205 contributes to the pyruvate binding site.

It belongs to the DapA family. In terms of assembly, homotetramer; dimer of dimers.

The protein resides in the cytoplasm. The enzyme catalyses L-aspartate 4-semialdehyde + pyruvate = (2S,4S)-4-hydroxy-2,3,4,5-tetrahydrodipicolinate + H2O + H(+). Its pathway is amino-acid biosynthesis; L-lysine biosynthesis via DAP pathway; (S)-tetrahydrodipicolinate from L-aspartate: step 3/4. In terms of biological role, catalyzes the condensation of (S)-aspartate-beta-semialdehyde [(S)-ASA] and pyruvate to 4-hydroxy-tetrahydrodipicolinate (HTPA). This chain is 4-hydroxy-tetrahydrodipicolinate synthase, found in Thermosipho africanus (strain TCF52B).